A 293-amino-acid polypeptide reads, in one-letter code: Ribosomal RNA small subunit methyltransferase A (293 aa).

S-adenosyl-L-methionine-binding residues include Asn-38, Val-40, Gly-65, Glu-86, Asp-116, and Asn-135.

The protein belongs to the class I-like SAM-binding methyltransferase superfamily. rRNA adenine N(6)-methyltransferase family. RsmA subfamily.

Its subcellular location is the cytoplasm. It catalyses the reaction adenosine(1518)/adenosine(1519) in 16S rRNA + 4 S-adenosyl-L-methionine = N(6)-dimethyladenosine(1518)/N(6)-dimethyladenosine(1519) in 16S rRNA + 4 S-adenosyl-L-homocysteine + 4 H(+). Its function is as follows. Specifically dimethylates two adjacent adenosines (A1518 and A1519) in the loop of a conserved hairpin near the 3'-end of 16S rRNA in the 30S particle. May play a critical role in biogenesis of 30S subunits. The sequence is that of Ribosomal RNA small subunit methyltransferase A from Nocardia farcinica (strain IFM 10152).